A 553-amino-acid chain; its full sequence is MEAEKRLFLKALKEKFEEDPKEKYTKFYTYGGWEQSVRKREFVAANEKVLAEKRQGVPLYNPDIGVPLGQRKLMPYKLSGTDSYCEGDDLHFMNNAAIQQLWDDIRRTVVVGMDTAHSVLEKRLGVEVTPETINEYMHTINHALSGGAVVQEHMVEVHPSLAWDSYARIFTGDDELAAELDSRFLIDINKLFPAEQAEALKKAIGKKTYQVSRVPSLVGRVCDGGTISRWSAMQIGMSFITAYKLCAGEAATADFSYASKHADVIQMGNALPGRRARGPNEPGGIQFGILSDVVQTTRVSDDPVEQSLEVVAAGAALYDQIWLGAYMSGGVGFTQYATAAYTDDILDDFSYYALDYVEKKYGRMGTKATMDVVEDIASEVTLYSLEQYDEYPALLEDHFGGSQRAAVAAAASGIGVCMATGNSNAGVNGWYLSQILHKEYHSRLGFYGYDLQDQCGASNSLAIRNDESAPLELRGPNYPNYAMNVGHQGEYAGIAQAAHSARGDAFAMSALIKVAFADPMLVFDFSKPRKEFARGALREFDAAGERDVILPAK.

Residue Gln-151 participates in coenzyme F430 binding. Residues Arg-229, 260–261, and Arg-274 contribute to the coenzyme B site; that span reads KH. Residues Tyr-336 and Tyr-447 each coordinate coenzyme M.

Belongs to the methyl-coenzyme M reductase alpha subunit family. As to quaternary structure, MCR is a hexamer of two alpha, two beta, and two gamma chains, forming a dimer of heterotrimers. Requires coenzyme F430 as cofactor.

The protein resides in the cytoplasm. It carries out the reaction coenzyme B + methyl-coenzyme M = methane + coenzyme M-coenzyme B heterodisulfide. It functions in the pathway one-carbon metabolism; methyl-coenzyme M reduction; methane from methyl-coenzyme M: step 1/1. In terms of biological role, component of the methyl-coenzyme M reductase (MCR) I that catalyzes the reductive cleavage of methyl-coenzyme M (CoM-S-CH3 or 2-(methylthio)ethanesulfonate) using coenzyme B (CoB or 7-mercaptoheptanoylthreonine phosphate) as reductant which results in the production of methane and the mixed heterodisulfide of CoB and CoM (CoM-S-S-CoB). This is the final step in methanogenesis. The chain is Methyl-coenzyme M reductase subunit alpha (mcrA) from Methanococcus vannielii.